The following is a 314-amino-acid chain: Ribosomal protein uL3 glutamine methyltransferase (314 aa).

This sequence belongs to the protein N5-glutamine methyltransferase family. PrmB subfamily.

The catalysed reaction is L-glutaminyl-[ribosomal protein uL3] + S-adenosyl-L-methionine = N(5)-methyl-L-glutaminyl-[ribosomal protein uL3] + S-adenosyl-L-homocysteine + H(+). Functionally, methylates large ribosomal subunit protein uL3 on a specific glutamine residue. The polypeptide is Ribosomal protein uL3 glutamine methyltransferase (Haemophilus influenzae (strain ATCC 51907 / DSM 11121 / KW20 / Rd)).